The chain runs to 810 residues: Chloride channel protein (810 aa).

Residues 2 to 48 (SHEKNEASGNPEAQSWKAQEAMLGVKTEVSRWRAVKNCLYRHLVKVL) lie on the Cytoplasmic side of the membrane. 2 helical membrane passes run 49-86 (GEDW…LFAM) and 93-116 (LQYL…CQIV). Residues 122-126 (GSGIP) carry the Selectivity filter part_1 motif. S123 provides a ligand contact to chloride. Residues 125–132 (IPELKTII) constitute an intramembrane region (helical). 2 helical membrane passes run 141-160 (LTLR…LSAG) and 166-184 (EGPF…NQLL). The Selectivity filter part_2 signature appears at 164–168 (GKEGP). Intramembrane regions (helical) lie at residues 201-213 (ILTV…ISCC) and 217-225 (PLAGVLFSI). The next 3 membrane-spanning stretches (helical) occupy residues 237 to 254 (YWRG…FRVL), 283 to 311 (LPAF…IVFM), and 320 to 339 (ILKK…LATL). N365 carries N-linked (GlcNAc...) asparagine glycosylation. Transmembrane regions (helical) follow at residues 389 to 408 (NIFI…AALA) and 416 to 439 (GAFV…MALL). The short motif at 416 to 420 (GAFVP) is the Selectivity filter part_3 element. F418 lines the chloride pocket. The segment at residues 456-470 (GEYAVIGAAAMTGAV) is an intramembrane region (helical). Positions 471–472 (TH) form an intramembrane region, note=Loop between two helices. The helical intramembrane region spans 473-484 (AVSTAVICFELT). Positions 485–489 (GQISH) form an intramembrane region, note=Loop between two helices. Residues 490–506 (VLPMMVAVILANMVAQG) traverse the membrane as a helical segment. Over 507–810 (LQPSLYDSII…RTATSNSSGK (304 aa)) the chain is Cytoplasmic. Y512 serves as a coordination point for chloride. The 59-residue stretch at 543-601 (MVRDVTSIASTSTYGDLLHVLRQTKLKFFPFVDTPETNTLLGSIERTEVEGLLQRRISA) folds into the CBS 1 domain. Disordered regions lie at residues 604–631 (RQPA…DVPG) and 658–688 (KVQT…KHKG). In terms of domain architecture, CBS 2 spans 724–781 (IDQSPFQLVEGTSLQKTHTLFSLLGLDRAYVTSMGKLVGVVALAEIQAAIEGSYQKGF).

This sequence belongs to the chloride channel (TC 2.A.49) family. ClC-0 subfamily. Homodimer. Each subunit has channel activity ('Double barreled channel').

The protein resides in the membrane. Voltage-gated chloride channel. This channel is thought to ensure the high conductance of the non-innervated membrane of the electrocyte necessary for efficient current generation caused by sodium influx through the acetylcholine receptor at the innervated membrane. This Tetronarce californica (Pacific electric ray) protein is Chloride channel protein.